A 251-amino-acid polypeptide reads, in one-letter code: Protein crossbronx (251 aa).

The UBC core domain occupies 20 to 176 (QQEYKILAEY…TRENIRESLA (157 aa)). The segment at 211–251 (QSKHLESQSQQSNNGGNGGGGGAATGLSWVKEGEFKPLSVE) is disordered. Over residues 225-234 (GGNGGGGGAA) the composition is skewed to gly residues.

This sequence belongs to the ubiquitin-conjugating enzyme family. FTS subfamily.

The protein is Protein crossbronx (cbx) of Drosophila willistoni (Fruit fly).